Here is a 556-residue protein sequence, read N- to C-terminus: 3-phosphoinositide-dependent protein kinase 1 (556 aa).

At tyrosine 9 the chain carries Phosphotyrosine; by SRC and INSR. Phosphoserine is present on serine 25. The tract at residues 26-80 (PSMVRTQTESSTPPGIPGGSRQGPAMDGTAAEPRPGAGSLQHAQPPPQPRKKRPE) is disordered. The span at 28–38 (MVRTQTESSTP) shows a compositional bias: polar residues. A Protein kinase domain is found at 82–342 (FKFGKILGEG…YGPLKAHPFF (261 aa)). Residues 92 to 94 (SFS) and lysine 111 each bind ATP. Residues 113–157 (LEKRHIIKENKVPYVTRERDVMSRLDHPFFVKLYFTFQDDEKLYF) form a PIF-pocket region. ATP is bound by residues 160–162 (SYA) and glutamate 166. Aspartate 205 (proton acceptor) is an active-site residue. Residues glutamate 209 and aspartate 223 each contribute to the ATP site. Serine 241 is modified (phosphoserine; by autocatalysis). An N6-acetyllysine modification is found at lysine 304. The residue at position 354 (threonine 354) is a Phosphothreonine; by MELK. Tyrosine 373 and tyrosine 376 each carry phosphotyrosine; by SRC and INSR. Serine 393 carries the post-translational modification Phosphoserine. Serine 394 is modified (phosphoserine; by MAP3K5). Serine 396 carries the phosphoserine modification. Serine 398 is modified (phosphoserine; by MAP3K5). Position 410 is a phosphoserine (serine 410). One can recognise a PH domain in the interval 459 to 550 (KMGPVDKRKG…EVWRQRYQSH (92 aa)). Serine 501 bears the Phosphoserine; by PKC/PRKCQ mark. Threonine 513 carries the phosphothreonine; by autocatalysis modification. The residue at position 529 (serine 529) is a Phosphoserine; by PKC/PRKCQ.

The protein belongs to the protein kinase superfamily. AGC Ser/Thr protein kinase family. PDPK1 subfamily. Homodimer in its autoinhibited state. Active as monomer. Interacts with NPRL2, PPARG, PAK1, PTK2B, GRB14, PKN1 (via C-terminus), STRAP and IKKB. The Tyr-9 phosphorylated form interacts with SRC, RASA1 and CRK (via their SH2 domains). Interacts with SGK3 in a phosphorylation-dependent manner. The tyrosine-phosphorylated form interacts with PTPN6. The Ser-241 phosphorylated form interacts with YWHAH and YWHAQ. Binds INSR in response to insulin. Interacts (via PH domain) with SMAD3, SMAD4 and SMAD7. Interacts with PKN2; the interaction stimulates PDPK1 autophosphorylation, its PI(3,4,5)P3-dependent kinase activity toward 'Ser-473' of AKT1 but also activates its kinase activity toward PRKCD and PRKCZ. Phosphorylation on Ser-241 in the activation loop is required for full activity. PDPK1 itself can autophosphorylate Ser-241, leading to its own activation. Autophosphorylation is inhibited by the apoptotic C-terminus cleavage product of PKN2. Tyr-9 phosphorylation is critical for stabilization of both PDPK1 and the PDPK1/SRC complex via HSP90-mediated protection of PDPK1 degradation. Angiotensin II stimulates the tyrosine phosphorylation of PDPK1 in vascular smooth muscle in a calcium- and SRC-dependent manner. Phosphorylated on Tyr-9, Tyr-373 and Tyr-376 by INSR in response to insulin. Palmitate negatively regulates autophosphorylation at Ser-241 and palmitate-induced phosphorylation at Ser-529 and Ser-501 by PKC/PRKCQ negatively regulates its ability to phosphorylate PKB/AKT1. Phosphorylation at Thr-354 by MELK partially inhibits kinase activity, the inhibition is cooperatively enhanced by phosphorylation at Ser-394 and Ser-398 by MAP3K5. Post-translationally, autophosphorylated; autophosphorylation is inhibited by the apoptotic C-terminus cleavage product of PKN2. In terms of processing, monoubiquitinated in the kinase domain, deubiquitinated by USP4. As to expression, appears to be expressed ubiquitously. The Tyr-9 phosphorylated form is markedly increased in diseased tissue compared with normal tissue from lung, liver, colon and breast.

The protein resides in the cytoplasm. Its subcellular location is the nucleus. It localises to the cell membrane. The protein localises to the cell junction. It is found in the focal adhesion. The enzyme catalyses L-seryl-[protein] + ATP = O-phospho-L-seryl-[protein] + ADP + H(+). The catalysed reaction is L-threonyl-[protein] + ATP = O-phospho-L-threonyl-[protein] + ADP + H(+). Its activity is regulated as follows. Homodimerization regulates its activity by maintaining the kinase in an autoinhibitory conformation. NPRL2 down-regulates its activity by interfering with tyrosine phosphorylation at the Tyr-9, Tyr-373 and Tyr-376 residues. The 14-3-3 protein YWHAQ acts as a negative regulator by association with the residues surrounding the Ser-241 residue. STRAP positively regulates its activity by enhancing its autophosphorylation and by stimulating its dissociation from YWHAQ. SMAD2, SMAD3, SMAD4 and SMAD7 also positively regulate its activity by stimulating its dissociation from YWHAQ. Activated by phosphorylation on Tyr-9, Tyr-373 and Tyr-376 by INSR in response to insulin. In terms of biological role, serine/threonine kinase which acts as a master kinase, phosphorylating and activating a subgroup of the AGC family of protein kinases. Its targets include: protein kinase B (PKB/AKT1, PKB/AKT2, PKB/AKT3), p70 ribosomal protein S6 kinase (RPS6KB1), p90 ribosomal protein S6 kinase (RPS6KA1, RPS6KA2 and RPS6KA3), cyclic AMP-dependent protein kinase (PRKACA), protein kinase C (PRKCD and PRKCZ), serum and glucocorticoid-inducible kinase (SGK1, SGK2 and SGK3), p21-activated kinase-1 (PAK1), TSSK3, protein kinase PKN (PKN1 and PKN2). Plays a central role in the transduction of signals from insulin by providing the activating phosphorylation to PKB/AKT1, thus propagating the signal to downstream targets controlling cell proliferation and survival, as well as glucose and amino acid uptake and storage. Negatively regulates the TGF-beta-induced signaling by: modulating the association of SMAD3 and SMAD7 with TGF-beta receptor, phosphorylating SMAD2, SMAD3, SMAD4 and SMAD7, preventing the nuclear translocation of SMAD3 and SMAD4 and the translocation of SMAD7 from the nucleus to the cytoplasm in response to TGF-beta. Activates PPARG transcriptional activity and promotes adipocyte differentiation. Activates the NF-kappa-B pathway via phosphorylation of IKKB. The tyrosine phosphorylated form is crucial for the regulation of focal adhesions by angiotensin II. Controls proliferation, survival, and growth of developing pancreatic cells. Participates in the regulation of Ca(2+) entry and Ca(2+)-activated K(+) channels of mast cells. Essential for the motility of vascular endothelial cells (ECs) and is involved in the regulation of their chemotaxis. Plays a critical role in cardiac homeostasis by serving as a dual effector for cell survival and beta-adrenergic response. Plays an important role during thymocyte development by regulating the expression of key nutrient receptors on the surface of pre-T cells and mediating Notch-induced cell growth and proliferative responses. Provides negative feedback inhibition to toll-like receptor-mediated NF-kappa-B activation in macrophages. Functionally, catalytically inactive. The polypeptide is 3-phosphoinositide-dependent protein kinase 1 (PDPK1) (Homo sapiens (Human)).